The following is a 269-amino-acid chain: Glutamate racemase (269 aa).

Substrate contacts are provided by residues 7 to 8 and 39 to 40; these read DS and YG. The Proton donor/acceptor role is filled by cysteine 70. 71 to 72 contributes to the substrate binding site; that stretch reads NT. The active-site Proton donor/acceptor is cysteine 194. 195-196 is a binding site for substrate; it reads TH.

Belongs to the aspartate/glutamate racemases family.

The enzyme catalyses L-glutamate = D-glutamate. The protein operates within cell wall biogenesis; peptidoglycan biosynthesis. Its function is as follows. Provides the (R)-glutamate required for cell wall biosynthesis. In Ruegeria sp. (strain TM1040) (Silicibacter sp.), this protein is Glutamate racemase.